We begin with the raw amino-acid sequence, 258 residues long: MRIDCLPALQDNYIFLLVDVEQRQAAVVDPAEAEPVLAALQAEGLTLTAILNTHHHGDHVGGNRRLLRQFPEAAVSASAVDRDRIPGQTVLLEAGDRLQICGQTAEVLFVPGHTRGHIAYYFPEVAEGNPRGALFCGDTLFAGGCGRLFEGTPAQMLDSLQQLRSLPDDTAIYCAHEYTLNNLRFALTVEPDNFDLQQRYQAVAIARQQGQATIPSRLDIEKATNPFLRWDQAALQAAVSSQDPVQTLARLRSRKDQF.

The Zn(2+) site is built by His54, His56, Asp58, His59, His113, Asp138, and His176.

The protein belongs to the metallo-beta-lactamase superfamily. Glyoxalase II family. In terms of assembly, monomer. Zn(2+) serves as cofactor.

It carries out the reaction an S-(2-hydroxyacyl)glutathione + H2O = a 2-hydroxy carboxylate + glutathione + H(+). It functions in the pathway secondary metabolite metabolism; methylglyoxal degradation; (R)-lactate from methylglyoxal: step 2/2. Its function is as follows. Thiolesterase that catalyzes the hydrolysis of S-D-lactoyl-glutathione to form glutathione and D-lactic acid. The protein is Hydroxyacylglutathione hydrolase of Synechococcus sp. (strain ATCC 27144 / PCC 6301 / SAUG 1402/1) (Anacystis nidulans).